The sequence spans 110 residues: Mobility group protein 1B (110 aa).

Residues 5-71 (PKRPLSAYML…NYIRALQEYE (67 aa)) constitute a DNA-binding region (HMG box). The span at 71 to 81 (ERNGGGGDDKG) shows a compositional bias: basic and acidic residues. Positions 71–110 (ERNGGGGDDKGKKRKGAAPKKGAGKKSKKGAHSDDDGDSE) are disordered. Basic residues predominate over residues 82-100 (KKRKGAAPKKGAGKKSKKG).

It belongs to the HMGB family.

The protein localises to the nucleus. The protein resides in the chromosome. Found in condensed chromomeres. Binds preferentially to AT-rich DNA. In Chironomus tentans (Midge), this protein is Mobility group protein 1B (HMG1B).